Reading from the N-terminus, the 97-residue chain is Small ribosomal subunit protein bS20 (97 aa).

Residues Met-1–Lys-22 form a disordered region.

The protein belongs to the bacterial ribosomal protein bS20 family.

Functionally, binds directly to 16S ribosomal RNA. The polypeptide is Small ribosomal subunit protein bS20 (Crocosphaera subtropica (strain ATCC 51142 / BH68) (Cyanothece sp. (strain ATCC 51142))).